The chain runs to 457 residues: Phosphatidate cytidylyltransferase (457 aa).

Helical transmembrane passes span 71–91 (VMIS…IVLI), 154–174 (FIVT…FVLF), 188–208 (GSLC…HLII), 214–234 (GLFW…FAYL), 255–275 (GFLG…RILS), and 330–350 (FHAL…GFFA).

This sequence belongs to the CDS family. As to quaternary structure, homodimer. The cofactor is Mg(2+).

Its subcellular location is the endoplasmic reticulum membrane. The protein localises to the cytoplasmic vesicle. It localises to the secretory vesicle. The enzyme catalyses a 1,2-diacyl-sn-glycero-3-phosphate + CTP + H(+) = a CDP-1,2-diacyl-sn-glycerol + diphosphate. It participates in phospholipid metabolism; CDP-diacylglycerol biosynthesis; CDP-diacylglycerol from sn-glycerol 3-phosphate: step 3/3. Its function is as follows. Supplies CDP-diacylglycerol, which may play an important role as both a precursor to phosphoinositide biosynthesis in the plasma membrane and as a negative effector of phosphatidylinositol 4-kinase activity, thereby exerting an effect on cell proliferation via a lipid-dependent signal transduction cascade. The polypeptide is Phosphatidate cytidylyltransferase (CDS1) (Saccharomyces cerevisiae (strain ATCC 204508 / S288c) (Baker's yeast)).